We begin with the raw amino-acid sequence, 156 residues long: Small ribosomal subunit protein uS7 (156 aa).

This sequence belongs to the universal ribosomal protein uS7 family. Part of the 30S ribosomal subunit. Contacts proteins S9 and S11.

Functionally, one of the primary rRNA binding proteins, it binds directly to 16S rRNA where it nucleates assembly of the head domain of the 30S subunit. Is located at the subunit interface close to the decoding center, probably blocks exit of the E-site tRNA. This chain is Small ribosomal subunit protein uS7, found in Clostridium botulinum (strain Alaska E43 / Type E3).